Consider the following 318-residue polypeptide: tRNA pseudouridine synthase B (318 aa).

Asp-47 functions as the Nucleophile in the catalytic mechanism.

The protein belongs to the pseudouridine synthase TruB family. Type 1 subfamily.

The enzyme catalyses uridine(55) in tRNA = pseudouridine(55) in tRNA. Functionally, responsible for synthesis of pseudouridine from uracil-55 in the psi GC loop of transfer RNAs. This Aliivibrio salmonicida (strain LFI1238) (Vibrio salmonicida (strain LFI1238)) protein is tRNA pseudouridine synthase B.